Here is a 269-residue protein sequence, read N- to C-terminus: Phosphate import ATP-binding protein PstB (269 aa).

Residues 14–253 (LSLENVSISY…EFNSTKKIFN (240 aa)) form the ABC transporter domain. 46–53 (GPSGCGKS) is an ATP binding site.

The protein belongs to the ABC transporter superfamily. Phosphate importer (TC 3.A.1.7) family. As to quaternary structure, the complex is composed of two ATP-binding proteins (PstB), two transmembrane proteins (PstC and PstA) and a solute-binding protein (PstS).

Its subcellular location is the cell inner membrane. It catalyses the reaction phosphate(out) + ATP + H2O = ADP + 2 phosphate(in) + H(+). Part of the ABC transporter complex PstSACB involved in phosphate import. Responsible for energy coupling to the transport system. The protein is Phosphate import ATP-binding protein PstB of Prochlorococcus marinus (strain MIT 9312).